A 394-amino-acid chain; its full sequence is 1-deoxy-D-xylulose 5-phosphate reductoisomerase (394 aa).

Residues T12, G13, S14, I15, G38, N41, and N132 each coordinate NADPH. A 1-deoxy-D-xylulose 5-phosphate-binding site is contributed by K133. E134 serves as a coordination point for NADPH. Residue D156 participates in Mn(2+) binding. The 1-deoxy-D-xylulose 5-phosphate site is built by S157, E158, S182, and H205. E158 provides a ligand contact to Mn(2+). G211 is an NADPH binding site. The 1-deoxy-D-xylulose 5-phosphate site is built by S218, N223, K224, and E227. E227 serves as a coordination point for Mn(2+).

Belongs to the DXR family. Requires Mg(2+) as cofactor. It depends on Mn(2+) as a cofactor.

It catalyses the reaction 2-C-methyl-D-erythritol 4-phosphate + NADP(+) = 1-deoxy-D-xylulose 5-phosphate + NADPH + H(+). The protein operates within isoprenoid biosynthesis; isopentenyl diphosphate biosynthesis via DXP pathway; isopentenyl diphosphate from 1-deoxy-D-xylulose 5-phosphate: step 1/6. Catalyzes the NADPH-dependent rearrangement and reduction of 1-deoxy-D-xylulose-5-phosphate (DXP) to 2-C-methyl-D-erythritol 4-phosphate (MEP). The sequence is that of 1-deoxy-D-xylulose 5-phosphate reductoisomerase from Paenarthrobacter aurescens (strain TC1).